We begin with the raw amino-acid sequence, 217 residues long: MEVIVPFSTERPKSRLSAVLTPDERAAFARTMLQDVLAAIDAADGEPRILATGAVGIDLPSPVEIDDRPLTDAVNAAIDARLGNDGAERVAVVMADLALATPNALRELFAAGREAEVAIAPGRGGGTNAFVAGHPAFRVDYHGASYLDHRRIADEIGAGVRVVDSHRLATDVDEPADLAELLIHAEADGDGGRAARWLRDAGFALDTTDGRVGVRRE.

The protein belongs to the CofC family. As to quaternary structure, homodimer.

It carries out the reaction (2S)-2-phospholactate + GTP + H(+) = (2S)-lactyl-2-diphospho-5'-guanosine + diphosphate. Its pathway is cofactor biosynthesis; coenzyme F420 biosynthesis. In terms of biological role, guanylyltransferase that catalyzes the activation of (2S)-2-phospholactate (2-PL) as (2S)-lactyl-2-diphospho-5'-guanosine, via the condensation of 2-PL with GTP. It is involved in the biosynthesis of coenzyme F420, a hydride carrier cofactor. This chain is 2-phospho-L-lactate guanylyltransferase, found in Halorubrum lacusprofundi (strain ATCC 49239 / DSM 5036 / JCM 8891 / ACAM 34).